Here is a 304-residue protein sequence, read N- to C-terminus: Elongation factor Ts (304 aa).

The tract at residues 79–82 (TDFV) is involved in Mg(2+) ion dislocation from EF-Tu.

The protein belongs to the EF-Ts family.

It is found in the cytoplasm. Functionally, associates with the EF-Tu.GDP complex and induces the exchange of GDP to GTP. It remains bound to the aminoacyl-tRNA.EF-Tu.GTP complex up to the GTP hydrolysis stage on the ribosome. This chain is Elongation factor Ts, found in Polaromonas sp. (strain JS666 / ATCC BAA-500).